The sequence spans 115 residues: Large ribosomal subunit protein bL20c (115 aa).

It belongs to the bacterial ribosomal protein bL20 family.

It is found in the plastid. The protein resides in the chloroplast. Its function is as follows. Binds directly to 23S ribosomal RNA and is necessary for the in vitro assembly process of the 50S ribosomal subunit. It is not involved in the protein synthesizing functions of that subunit. The polypeptide is Large ribosomal subunit protein bL20c (rpl20) (Chlorella vulgaris (Green alga)).